A 306-amino-acid polypeptide reads, in one-letter code: HORMA domain-containing protein 2 (306 aa).

The 204-residue stretch at 29–232 (HESLIMVKKL…TGFHSMKVKV (204 aa)) folds into the HORMA domain.

In terms of assembly, interacts with HORMAD1. Phosphorylated in a SPO11-dependent manner.

Its subcellular location is the nucleus. The protein localises to the chromosome. Essential for synapsis surveillance during meiotic prophase via the recruitment of ATR activity. Plays a key role in the male mid-pachytene checkpoint and the female meiotic prophase checkpoint: required for efficient build-up of ATR activity on unsynapsed chromosome regions, a process believed to form the basis of meiotic silencing of unsynapsed chromatin (MSUC) and meiotic prophase quality control in both sexes. Required for the DNA double-strand break-independent, BRCA1-dependent activation of ATR on the sex chromosomes that is essential for normal sex body formation. The sequence is that of HORMA domain-containing protein 2 (HORMAD2) from Bos taurus (Bovine).